The chain runs to 585 residues: Pyruvate kinase (585 aa).

Arg-32 contributes to the substrate binding site. Residues Asn-34, Ser-36, Asp-66, and Thr-67 each coordinate K(+). 34-37 (NFSH) is a binding site for ATP. The ATP site is built by Arg-73 and Lys-156. Glu-221 is a binding site for Mg(2+). Substrate is bound by residues Gly-244, Asp-245, and Thr-277. Asp-245 is a Mg(2+) binding site.

Belongs to the pyruvate kinase family. This sequence in the C-terminal section; belongs to the PEP-utilizing enzyme family. It depends on Mg(2+) as a cofactor. Requires K(+) as cofactor.

The catalysed reaction is pyruvate + ATP = phosphoenolpyruvate + ADP + H(+). It participates in carbohydrate degradation; glycolysis; pyruvate from D-glyceraldehyde 3-phosphate: step 5/5. The polypeptide is Pyruvate kinase (pyk) (Staphylococcus epidermidis (strain ATCC 35984 / DSM 28319 / BCRC 17069 / CCUG 31568 / BM 3577 / RP62A)).